The chain runs to 711 residues: Polyribonucleotide nucleotidyltransferase (711 aa).

Residues Asp491 and Asp497 each coordinate Mg(2+). In terms of domain architecture, KH spans 559–618; that stretch reads PRLITIKINPEKIRDVIGKGGAVIRALTEETGTQIDISDEGVVTIASVDAAAGQEAKRRI. The S1 motif domain maps to 628–696; that stretch reads GKIYEGTVLK…DRGRLKLSMK (69 aa).

It belongs to the polyribonucleotide nucleotidyltransferase family. The cofactor is Mg(2+).

The protein localises to the cytoplasm. The catalysed reaction is RNA(n+1) + phosphate = RNA(n) + a ribonucleoside 5'-diphosphate. Involved in mRNA degradation. Catalyzes the phosphorolysis of single-stranded polyribonucleotides processively in the 3'- to 5'-direction. The sequence is that of Polyribonucleotide nucleotidyltransferase from Janthinobacterium sp. (strain Marseille) (Minibacterium massiliensis).